Consider the following 955-residue polypeptide: Valine--tRNA ligase (955 aa).

Positions Pro-41–His-51 match the 'HIGH' region motif. Residues Lys-554–Ser-558 carry the 'KMSKS' region motif. Lys-557 is an ATP binding site. The stretch at Gln-926–Lys-946 forms a coiled coil.

It belongs to the class-I aminoacyl-tRNA synthetase family. ValS type 1 subfamily. In terms of assembly, monomer.

The protein resides in the cytoplasm. It catalyses the reaction tRNA(Val) + L-valine + ATP = L-valyl-tRNA(Val) + AMP + diphosphate. Catalyzes the attachment of valine to tRNA(Val). As ValRS can inadvertently accommodate and process structurally similar amino acids such as threonine, to avoid such errors, it has a 'posttransfer' editing activity that hydrolyzes mischarged Thr-tRNA(Val) in a tRNA-dependent manner. The sequence is that of Valine--tRNA ligase from Buchnera aphidicola subsp. Acyrthosiphon pisum (strain APS) (Acyrthosiphon pisum symbiotic bacterium).